A 1143-amino-acid polypeptide reads, in one-letter code: AP-3 complex subunit delta (1143 aa).

8 HEAT repeats span residues 129-166, 167-203, 205-242, 245-279, 280-317, 318-354, 356-389, and 416-455; these read DLAR…RYPE, SLRP…RNPK, YLPL…HEPR, KKLI…SDHI, PLMK…IHPK, AVSE…KKNI, DIVF…MGTY, and LIAS…PTEG. Disordered stretches follow at residues 520–541, 634–692, 704–728, 741–792, and 829–899; these read KIPS…DQNE, QEPI…RHPI, KQAN…PENI, HVGA…NDAL, and KKNA…QAAA. Residues 524-540 are compositionally biased toward acidic residues; it reads LDDDDEEEEAQEEEDQN. Positions 526 to 550 form a coiled coil; that stretch reads DDDEEEEAQEEEDQNEITHEIVQEC. Basic residues predominate over residues 653-662; it reads HQKKHHKHHR. The span at 666–675 shows a compositional bias: acidic residues; that stretch reads DGDDDEDDET. Positions 814 to 835 form a coiled coil; that stretch reads TDIIKEKEREMAMLAKKNAKLS. A compositionally biased stretch (polar residues) spans 840 to 849; it reads PSTANYSEVT. Composition is skewed to low complexity over residues 854–867 and 881–899; these read APAK…AAGS and KPAA…QAAA. Residues 914–1016 enclose the GAE domain; that stretch reads KTILDDDNFK…FTLLASPSSS (103 aa).

The protein belongs to the adaptor complexes large subunit family. Adaptor protein complex 3 (AP-3) is a heterotetramer composed of two large adaptins (delta-type subunit and beta-type subunit), a medium adaptin (mu-type subunit) and a small adaptin (sigma-type subunit).

Its subcellular location is the endosome membrane. In terms of biological role, part of the AP-3 complex, an adaptor-related complex which is essential for the compartmentalization of the endocytic pathway. The chain is AP-3 complex subunit delta (ap3d1) from Dictyostelium discoideum (Social amoeba).